A 538-amino-acid chain; its full sequence is CWF19-like protein 1 (538 aa).

Residues 298-324 (QGRKRSSTGRDSKSSPHPKQPRKPPQP) are disordered.

It belongs to the CWF19 family. In terms of tissue distribution, expressed in many brain regions, including cerebellum, thalamus and occipital, parietal and temporal lobes (at protein level). Also expressed in the spinal cord (at protein level).

The chain is CWF19-like protein 1 (CWF19L1) from Homo sapiens (Human).